The following is a 1395-amino-acid chain: G-protein coupled receptor-associated sorting protein 1 (1395 aa).

Disordered stretches follow at residues 1 to 25, 45 to 83, and 269 to 288; these read MTGA…VVGG, QIMP…AKAI, and TNTW…FRSK. Residues 269 to 281 show a composition bias toward basic and acidic residues; that stretch reads TNTWSGPREDPNS. At S297 the chain carries Phosphoserine. The disordered stretch occupies residues 446–469; that stretch reads SMGTGASSKSRPRTDGERIGDSLF. The span at 457–469 shows a compositional bias: basic and acidic residues; it reads PRTDGERIGDSLF. S631 and S899 each carry phosphoserine. The OPRD1-binding stretch occupies residues 899-1395; that stretch reads SETEEETIFG…QNDPEGDQEN (497 aa).

Belongs to the GPRASP family. In terms of assembly, interacts with cytoplasmic tails of a variety of G-protein coupled receptors such as D2 dopamine receptor/DRD2, delta opioid receptor/OPRD1, beta-2 adrenergic receptor/ADRB2 and D4 dopamine receptor/DRD4. Interacts with PER1. Interacts with BECN2; the interaction is direct. Expressed in the brain, with lower expression in medulla, spinal cord and substantia nigra.

It localises to the cytoplasm. Modulates lysosomal sorting and functional down-regulation of a variety of G-protein coupled receptors. Targets receptors for degradation in lysosomes via its interaction with BECN2. The protein is G-protein coupled receptor-associated sorting protein 1 (GPRASP1) of Homo sapiens (Human).